The following is a 32-amino-acid chain: Cruzioseptin-9 (32 aa).

The residue at position 29 (Gln29) is a Glutamine amide. Residues Glu31–Gln32 constitute a propeptide that is removed on maturation.

As to expression, expressed by the skin glands.

The protein localises to the secreted. Functionally, has antimicrobial activity. The protein is Cruzioseptin-9 of Cruziohyla calcarifer (Splendid leaf frog).